A 396-amino-acid chain; its full sequence is tRNA (guanine(9)-N1)-methyltransferase (396 aa).

Composition is skewed to basic and acidic residues over residues 1–18 and 52–73; these read MEDD…HDEV and DRID…HGKD. The segment at 1–109 is disordered; that stretch reads MEDDDRPRKY…KVKRKEKLVA (109 aa). An SAM-dependent MTase TRM10-type domain is found at 139-357; that stretch reads TQKKFQRSTL…QVIPQRKGGK (219 aa). Residues 264–265, Gly284, 288–292, Cys296, Leu310, and 322–324 each bind S-adenosyl-L-methionine; these read LS, DKNRH, and QVL. Asp288 (proton acceptor) is an active-site residue. A disordered region spans residues 354-396; that stretch reads KGGKLKSADHESEDQTPRESVEAVEAEPDGEGAAAEAGEGGKE. Positions 359–374 are enriched in basic and acidic residues; sequence KSADHESEDQTPRESV.

Belongs to the class IV-like SAM-binding methyltransferase superfamily. TRM10 family. In terms of assembly, monomer.

It localises to the cytoplasm. Its subcellular location is the nucleus. The enzyme catalyses guanosine(9) in tRNA + S-adenosyl-L-methionine = N(1)-methylguanosine(9) in tRNA + S-adenosyl-L-homocysteine + H(+). Functionally, S-adenosyl-L-methionine-dependent guanine N(1)-methyltransferase that catalyzes the formation of N(1)-methylguanine at position 9 (m1G9) in cytoplasmic tRNA. In Aspergillus fumigatus (strain ATCC MYA-4609 / CBS 101355 / FGSC A1100 / Af293) (Neosartorya fumigata), this protein is tRNA (guanine(9)-N1)-methyltransferase.